Here is a 201-residue protein sequence, read N- to C-terminus: L(+)-tartrate dehydratase subunit beta (201 aa).

Residue His37 is part of the active site.

The protein belongs to the class-I fumarase family. As to quaternary structure, heterotetramer of two alpha and two beta subunits.

It catalyses the reaction (2R,3R)-tartrate = oxaloacetate + H2O. In Escherichia coli O6:K15:H31 (strain 536 / UPEC), this protein is L(+)-tartrate dehydratase subunit beta (ttdB).